The primary structure comprises 496 residues: Glutamyl-tRNA(Gln) amidotransferase subunit A (496 aa).

Catalysis depends on charge relay system residues Lys75 and Ser150. Ser174 (acyl-ester intermediate) is an active-site residue.

It belongs to the amidase family. GatA subfamily. Heterotrimer of A, B and C subunits.

The catalysed reaction is L-glutamyl-tRNA(Gln) + L-glutamine + ATP + H2O = L-glutaminyl-tRNA(Gln) + L-glutamate + ADP + phosphate + H(+). Its function is as follows. Allows the formation of correctly charged Gln-tRNA(Gln) through the transamidation of misacylated Glu-tRNA(Gln) in organisms which lack glutaminyl-tRNA synthetase. The reaction takes place in the presence of glutamine and ATP through an activated gamma-phospho-Glu-tRNA(Gln). The sequence is that of Glutamyl-tRNA(Gln) amidotransferase subunit A from Burkholderia lata (strain ATCC 17760 / DSM 23089 / LMG 22485 / NCIMB 9086 / R18194 / 383).